The primary structure comprises 179 residues: Large ribosomal subunit protein uL5 (179 aa).

The protein belongs to the universal ribosomal protein uL5 family. Part of the 50S ribosomal subunit; part of the 5S rRNA/L5/L18/L25 subcomplex. Contacts the 5S rRNA and the P site tRNA. Forms a bridge to the 30S subunit in the 70S ribosome.

This is one of the proteins that bind and probably mediate the attachment of the 5S RNA into the large ribosomal subunit, where it forms part of the central protuberance. In the 70S ribosome it contacts protein S13 of the 30S subunit (bridge B1b), connecting the 2 subunits; this bridge is implicated in subunit movement. Contacts the P site tRNA; the 5S rRNA and some of its associated proteins might help stabilize positioning of ribosome-bound tRNAs. In Geotalea daltonii (strain DSM 22248 / JCM 15807 / FRC-32) (Geobacter daltonii), this protein is Large ribosomal subunit protein uL5.